The following is a 70-amino-acid chain: UPF0150 protein TM_1311 (70 aa).

This sequence belongs to the UPF0150 family.

This Thermotoga maritima (strain ATCC 43589 / DSM 3109 / JCM 10099 / NBRC 100826 / MSB8) protein is UPF0150 protein TM_1311.